Reading from the N-terminus, the 199-residue chain is Ribonuclease P protein subunit p25 (199 aa).

A compositionally biased stretch (basic and acidic residues) spans 1 to 11 (MENFRKVRSEE). 2 disordered regions span residues 1 to 31 (MENF…FADL) and 146 to 199 (PRQL…DRTA). The residue at position 172 (S172) is a Phosphoserine. Residues 190–199 (PEAENEDRTA) are compositionally biased toward acidic residues.

It belongs to the histone-like Alba family. Component of nuclear RNase P and RNase MRP ribonucleoproteins. RNase P consists of a catalytic RNA moiety and 10 different protein chains; POP1, POP4, POP5, POP7, RPP14, RPP21, RPP25, RPP30, RPP38 and RPP40. Within the RNase P complex, POP1, POP7 and RPP25 form the 'finger' subcomplex, POP5, RPP14, RPP40 and homodimeric RPP30 form the 'palm' subcomplex, and RPP21, POP4 and RPP38 form the 'wrist' subcomplex. All subunits of the RNase P complex interact with the catalytic RNA. Several subunits of RNase P are also part of the RNase MRP complex. RNase MRP consists of a catalytic RNA moiety and about 8 protein subunits; POP1, POP7, RPP25, RPP30, RPP38, RPP40 and possibly also POP4 and POP5. POP7 forms a heterodimer with RPP25 that binds to the P3 stem loop of the catalytic RNA.

It localises to the nucleus. The protein resides in the nucleolus. Functionally, component of ribonuclease P, a ribonucleoprotein complex that generates mature tRNA molecules by cleaving their 5'-ends. Also a component of the MRP ribonuclease complex, which cleaves pre-rRNA sequences. In Rattus norvegicus (Rat), this protein is Ribonuclease P protein subunit p25 (Rpp25).